The following is a 203-amino-acid chain: ADP-ribosylation factor-like protein 6-interacting protein 1 (203 aa).

The Cytoplasmic portion of the chain corresponds to M1–R41. The chain crosses the membrane as a helical span at residues A42–L62. The Lumenal segment spans residues D63–S65. The chain crosses the membrane as a helical span at residues V66–I86. Over L87 to K133 the chain is Cytoplasmic. Residues P134–N175 traverse the membrane as a helical segment. The Lumenal portion of the chain corresponds to Q176 to E203.

This sequence belongs to the ARL6ip family. In terms of assembly, homooligomer. Heterodimer with ARL6IP5. Interacts with ARL6. Interacts with TMEM33. Interacts with ATL1. In terms of tissue distribution, expressed in all hematopoietic cell lineages, but the highest level of expression is found in early myeloid progenitor cells. Expressed in brain, bone marrow, thymus and lung. Expressed at low level in liver, kidney and spleen. Not detected in heart.

The protein resides in the endomembrane system. It is found in the endoplasmic reticulum membrane. Its subcellular location is the endoplasmic reticulum. Positively regulates SLC1A1/EAAC1-mediated glutamate transport by increasing its affinity for glutamate in a PKC activity-dependent manner. Promotes the catalytic efficiency of SLC1A1/EAAC1 probably by reducing its interaction with ARL6IP5, a negative regulator of SLC1A1/EAAC1-mediated glutamate transport. Plays a role in the formation and stabilization of endoplasmic reticulum tubules. Negatively regulates apoptosis, possibly by modulating the activity of caspase-9 (CASP9). Inhibits cleavage of CASP9-dependent substrates and downstream markers of apoptosis but not CASP9 itself. May be involved in protein transport, membrane trafficking, or cell signaling during hematopoietic maturation. This chain is ADP-ribosylation factor-like protein 6-interacting protein 1 (ARL6IP1), found in Homo sapiens (Human).